Here is a 91-residue protein sequence, read N- to C-terminus: MQFSSLSLVFLAVIGAIANPIAVDSELENRDVQLSKYGGECNLKTNACRYTKGGKSVFVPCGTAANKRCKSDRHHCEYDEHHKRVDCQTPV.

An N-terminal signal peptide occupies residues 1–18; the sequence is MQFSSLSLVFLAVIGAIA. Residues 19–33 constitute a propeptide that is removed on maturation; sequence NPIAVDSELENRDVQ. Cystine bridges form between Cys-41–Cys-69, Cys-48–Cys-76, and Cys-61–Cys-87.

It belongs to the antifungal protein pafB family.

The protein localises to the secreted. Its subcellular location is the host cytoplasm. In terms of biological role, antifungal protein; part of the gene cluster that mediates the biosynthesis of oxopyrrolidines, polyketide-amino acid hybrid compounds with feature structures of tetramic acid. Acts as an inhibitor of growth of various molds and yeasts. This chain is Antifungal protein opdH, found in Penicillium oxalicum (strain 114-2 / CGMCC 5302) (Penicillium decumbens).